Reading from the N-terminus, the 386-residue chain is Cytochrome b (386 aa).

4 helical membrane passes run 32 to 52, 76 to 98, 113 to 133, and 179 to 199; these read LGSL…FLAM, WFIR…IHIG, VWNV…LGYC, and FFAF…MHFM. Positions 82 and 96 each coordinate heme b. Heme b is bound by residues His-183 and His-197. An a ubiquinone-binding site is contributed by His-202. 4 consecutive transmembrane segments (helical) span residues 225–245, 289–309, 321–341, and 348–368; these read FIFK…LFVF, LLGV…PITD, FSKF…HLGE, and FVVM…VIVP.

This sequence belongs to the cytochrome b family. In terms of assembly, fungal cytochrome b-c1 complex contains 10 subunits; 3 respiratory subunits, 2 core proteins and 5 low-molecular weight proteins. Cytochrome b-c1 complex is a homodimer. Heme b is required as a cofactor.

It is found in the mitochondrion inner membrane. Its function is as follows. Component of the ubiquinol-cytochrome c reductase complex (complex III or cytochrome b-c1 complex) that is part of the mitochondrial respiratory chain. The b-c1 complex mediates electron transfer from ubiquinol to cytochrome c. Contributes to the generation of a proton gradient across the mitochondrial membrane that is then used for ATP synthesis. The sequence is that of Cytochrome b (COB) from Kluyveromyces lactis (strain ATCC 8585 / CBS 2359 / DSM 70799 / NBRC 1267 / NRRL Y-1140 / WM37) (Yeast).